The primary structure comprises 242 residues: Probable ABC transporter ATP-binding protein PEB1C (242 aa).

Residues 2-236 enclose the ABC transporter domain; the sequence is IELKNVNKYY…PKTERARLFL (235 aa). ATP is bound at residue 34–41; the sequence is GPSGSGKS.

The protein belongs to the ABC transporter superfamily.

Its subcellular location is the cell inner membrane. Its function is as follows. Most probably involved, with PEB1, in a binding-protein-dependent transport system for an amino acid. Probably responsible for energy coupling to the transport system. The polypeptide is Probable ABC transporter ATP-binding protein PEB1C (peb1C) (Campylobacter jejuni subsp. jejuni serotype O:23/36 (strain 81-176)).